The chain runs to 415 residues: Serine/threonine transporter SstT (415 aa).

The next 8 helical transmembrane spans lie at 23 to 43 (ILIG…AAIA), 47 to 67 (LGTL…LMLV), 85 to 105 (ILFL…LFSF), 144 to 164 (ALLN…GFAL), 181 to 201 (AVTF…FGLV), 220 to 240 (LLVL…LLVF), 293 to 313 (IPLG…VLTL), and 333 to 353 (VVAS…LLLI).

The protein belongs to the dicarboxylate/amino acid:cation symporter (DAACS) (TC 2.A.23) family.

The protein localises to the cell inner membrane. It catalyses the reaction L-serine(in) + Na(+)(in) = L-serine(out) + Na(+)(out). The enzyme catalyses L-threonine(in) + Na(+)(in) = L-threonine(out) + Na(+)(out). Involved in the import of serine and threonine into the cell, with the concomitant import of sodium (symport system). The sequence is that of Serine/threonine transporter SstT from Klebsiella pneumoniae subsp. pneumoniae (strain ATCC 700721 / MGH 78578).